The chain runs to 197 residues: GTP cyclohydrolase-2 (197 aa).

50 to 54 (RIHSE) is a GTP binding site. Zn(2+) is bound by residues C55, C66, and C68. GTP-binding positions include Q71, 93–95 (EGR), and T115. D127 serves as the catalytic Proton acceptor. R129 functions as the Nucleophile in the catalytic mechanism. GTP-binding residues include T150 and K155.

This sequence belongs to the GTP cyclohydrolase II family. It depends on Zn(2+) as a cofactor.

It carries out the reaction GTP + 4 H2O = 2,5-diamino-6-hydroxy-4-(5-phosphoribosylamino)-pyrimidine + formate + 2 phosphate + 3 H(+). The protein operates within cofactor biosynthesis; riboflavin biosynthesis; 5-amino-6-(D-ribitylamino)uracil from GTP: step 1/4. Its function is as follows. Catalyzes the conversion of GTP to 2,5-diamino-6-ribosylamino-4(3H)-pyrimidinone 5'-phosphate (DARP), formate and pyrophosphate. This Neisseria meningitidis serogroup A / serotype 4A (strain DSM 15465 / Z2491) protein is GTP cyclohydrolase-2.